The following is a 435-amino-acid chain: Zinc finger CCCH domain-containing protein 67 (435 aa).

Residues Met1–Glu91 are disordered. C3H1-type zinc fingers lie at residues Arg101–Arg129, Asn148–Glu176, and Arg194–Pro222. The disordered stretch occupies residues Gly235–Pro274. Residues Ser247–Ser256 show a composition bias toward low complexity. 2 consecutive C3H1-type zinc fingers follow at residues Arg334 to Asn362 and Arg380 to Pro408. Residues Ser412–His435 form a disordered region.

Its subcellular location is the nucleus. The protein is Zinc finger CCCH domain-containing protein 67 of Arabidopsis thaliana (Mouse-ear cress).